Consider the following 286-residue polypeptide: MSLTSRLYKLRLSSLHSFGSLPILPPPLRSSRIAAPLSLRVSLSTRSIATSIAMGEAADAGMDAVQRRLMFDDECILVDEVDRVVGHESKYNCHMWEKIESGNMLHRAFSVFLFNSKFELLLQQRSATKVTFPLVWTNTCCSHPLYRESELIDENNLGVRNAAQRKLLDELGIPAEDVPVDEFTPLSRMLYKAPSDGKWGEHELDYLLFIVRDVAVHPNPDEVAEIKYVNREQLKELLKKADAGEEGLKLSPWFRLVVDNFLPKWWDHVEKGTLSEAVDMKSIHKL.

The 153-residue stretch at 104–256 (MLHRAFSVFL…GLKLSPWFRL (153 aa)) folds into the Nudix hydrolase domain. Residues cysteine 141 and glutamate 203 contribute to the active site.

It belongs to the IPP isomerase type 1 family.

The enzyme catalyses isopentenyl diphosphate = dimethylallyl diphosphate. The protein operates within isoprenoid biosynthesis; dimethylallyl diphosphate biosynthesis; dimethylallyl diphosphate from isopentenyl diphosphate: step 1/1. It functions in the pathway porphyrin-containing compound metabolism; chlorophyll biosynthesis. In terms of biological role, catalyzes the 1,3-allylic rearrangement of the homoallylic substrate isopentenyl (IPP) to its highly electrophilic allylic isomer, dimethylallyl diphosphate (DMAPP). In Clarkia breweri (Fairy fans), this protein is Isopentenyl-diphosphate Delta-isomerase II (IPI2).